The sequence spans 79 residues: Small ribosomal subunit protein uS17 (79 aa).

Belongs to the universal ribosomal protein uS17 family. Part of the 30S ribosomal subunit.

Its function is as follows. One of the primary rRNA binding proteins, it binds specifically to the 5'-end of 16S ribosomal RNA. In Orientia tsutsugamushi (strain Ikeda) (Rickettsia tsutsugamushi), this protein is Small ribosomal subunit protein uS17.